Consider the following 133-residue polypeptide: Large ribosomal subunit protein bL12 (133 aa).

Positions 98–118 (DMVESTPKPIKEGTGKEDAED) are disordered.

It belongs to the bacterial ribosomal protein bL12 family. Homodimer. Part of the ribosomal stalk of the 50S ribosomal subunit. Forms a multimeric L10(L12)X complex, where L10 forms an elongated spine to which 2 to 4 L12 dimers bind in a sequential fashion. Binds GTP-bound translation factors.

Functionally, forms part of the ribosomal stalk which helps the ribosome interact with GTP-bound translation factors. Is thus essential for accurate translation. This chain is Large ribosomal subunit protein bL12, found in Crocosphaera subtropica (strain ATCC 51142 / BH68) (Cyanothece sp. (strain ATCC 51142)).